A 387-amino-acid polypeptide reads, in one-letter code: Phosphoglycerate kinase (387 aa).

Residues aspartate 21 to asparagine 23, arginine 36, histidine 59 to arginine 62, arginine 113, and arginine 146 contribute to the substrate site. Residues lysine 197, glutamate 314, and glycine 340 to threonine 343 each bind ATP.

Belongs to the phosphoglycerate kinase family. Monomer.

It is found in the cytoplasm. It catalyses the reaction (2R)-3-phosphoglycerate + ATP = (2R)-3-phospho-glyceroyl phosphate + ADP. It functions in the pathway carbohydrate degradation; glycolysis; pyruvate from D-glyceraldehyde 3-phosphate: step 2/5. The chain is Phosphoglycerate kinase from Photorhabdus luminescens (Xenorhabdus luminescens).